A 199-amino-acid polypeptide reads, in one-letter code: Recombination protein RecR (199 aa).

The C4-type zinc-finger motif lies at 58-73; sequence CRICYNITDTEVCNIC. Residues 81–176 enclose the Toprim domain; that stretch reads SLICVVSHPM…KVTRIAHGVP (96 aa).

It belongs to the RecR family.

In terms of biological role, may play a role in DNA repair. It seems to be involved in an RecBC-independent recombinational process of DNA repair. It may act with RecF and RecO. This Thermoanaerobacter pseudethanolicus (strain ATCC 33223 / 39E) (Clostridium thermohydrosulfuricum) protein is Recombination protein RecR.